Consider the following 498-residue polypeptide: ATP synthase subunit beta, chloroplastic (498 aa).

172–179 provides a ligand contact to ATP; the sequence is GGAGVGKT.

Belongs to the ATPase alpha/beta chains family. As to quaternary structure, F-type ATPases have 2 components, CF(1) - the catalytic core - and CF(0) - the membrane proton channel. CF(1) has five subunits: alpha(3), beta(3), gamma(1), delta(1), epsilon(1). CF(0) has four main subunits: a(1), b(1), b'(1) and c(9-12).

It is found in the plastid. It localises to the chloroplast thylakoid membrane. It catalyses the reaction ATP + H2O + 4 H(+)(in) = ADP + phosphate + 5 H(+)(out). Its function is as follows. Produces ATP from ADP in the presence of a proton gradient across the membrane. The catalytic sites are hosted primarily by the beta subunits. The protein is ATP synthase subunit beta, chloroplastic of Agrostis stolonifera (Creeping bentgrass).